The primary structure comprises 370 residues: Vasopressin V2 receptor (370 aa).

A compositionally biased stretch (polar residues) spans 1-21 (MFMASTTSAVPWHLSQPTPAG). The tract at residues 1–26 (MFMASTTSAVPWHLSQPTPAGNGSEG) is disordered. The Extracellular portion of the chain corresponds to 1–38 (MFMASTTSAVPWHLSQPTPAGNGSEGELLTARDPLLAQ). N-linked (GlcNAc...) asparagine glycosylation is present at asparagine 22. The chain crosses the membrane as a helical span at residues 39 to 63 (AELALLSTVFVAVALSNGLVLGALV). Over 64–77 (RRGRRGRWAPMHVF) the chain is Cytoplasmic. A helical membrane pass occupies residues 78 to 98 (IGHLCLADLAVALFQVLPQLA). Topologically, residues 99 to 113 (WDATDRFRGPDALCR) are extracellular. A helical transmembrane segment spans residues 114–135 (AVKYLQMVGMYASSYMILAMTL). At 136 to 159 (DRHRAICRPMLAHRHGGGTHWNRP) the chain is on the cytoplasmic side. The chain crosses the membrane as a helical span at residues 160 to 180 (VLLAWAFSLLFSLPQLFIFAQ). Residues 181-199 (RDVDGSGVLDCWARFAEPW) are Extracellular-facing. Residues 200-219 (GLRAYVTWIALMVFVAPALG) traverse the membrane as a helical segment. At 220–270 (IAACQVLIFREIHASLGPGPVPRAGGPRRGCRPGSPAEGARVSAAVAKTVK) the chain is on the cytoplasmic side. A helical membrane pass occupies residues 271-292 (MTLVIVIVYVLCWAPFFLVQLW). Topologically, residues 293–307 (AAWDPEAPREGPPFV) are extracellular. The helical transmembrane segment at 308-327 (LLMLLASLNSCTNPWIYASF) threads the bilayer. Over 328–370 (SSSISSELRSLLCCTWRRAPPSPGPQEESCATASSFLAKDTPS) the chain is Cytoplasmic. S-palmitoyl cysteine attachment occurs at residues cysteine 340 and cysteine 341. The tract at residues 347 to 370 (PPSPGPQEESCATASSFLAKDTPS) is disordered.

Belongs to the G-protein coupled receptor 1 family. Vasopressin/oxytocin receptor subfamily. In terms of assembly, interacts with ARRDC4. Identified in a complex containing at least ARRDC4, V2R and HGS. Interacts with TMEM147.

It is found in the cell membrane. In terms of biological role, receptor for arginine vasopressin. The activity of this receptor is mediated by G proteins which activate adenylate cyclase. Involved in renal water reabsorption. In Bos taurus (Bovine), this protein is Vasopressin V2 receptor (AVPR2).